Here is a 282-residue protein sequence, read N- to C-terminus: Probable ribosomal RNA small subunit methyltransferase A (282 aa).

S-adenosyl-L-methionine contacts are provided by H24, L26, G51, E72, D100, and N115.

Belongs to the class I-like SAM-binding methyltransferase superfamily. rRNA adenine N(6)-methyltransferase family. RsmA subfamily.

It localises to the cytoplasm. Its function is as follows. Specifically dimethylates two adjacent adenosines in the loop of a conserved hairpin near the 3'-end of 16S rRNA in the 30S particle. May play a critical role in biogenesis of 30S subunits. In Halobacterium salinarum (strain ATCC 29341 / DSM 671 / R1), this protein is Probable ribosomal RNA small subunit methyltransferase A.